The chain runs to 427 residues: O-methyltransferase FrzF (427 aa).

D281 is an S-adenosyl-L-methionine binding site. Catalysis depends on H327, which acts as the Proton acceptor.

The protein belongs to the class I-like SAM-binding methyltransferase superfamily. Cation-independent O-methyltransferase family. Homodimer.

The enzyme catalyses (1S,4S)-4-[(4-hydroxyphenyl)methyl]-2,5-diazaspiro[bicyclo[3.2.1]octane-6,1'-cyclohexan]-4'-one + S-adenosyl-L-methionine = (1S,4S)-4-[(4-methoxyphenyl)methyl]-2,5-diazaspiro[bicyclo[3.2.1]octane-6,1'-cyclohexan]-4'-one + S-adenosyl-L-homocysteine + H(+). It catalyses the reaction (1S,4S)-4-[(4-hydroxyphenyl)methyl]-2-methyl-2,5-diazaspiro[bicyclo[3.2.1]octane-6,1'-cyclohexan]-4'-one + S-adenosyl-L-methionine = (1S,4S)-4-[(4-methoxyphenyl)methyl]-2-methyl-2,5-diazaspiro[bicyclo[3.2.1]octane-6,1'-cyclohexan]-4'-one + S-adenosyl-L-homocysteine + H(+). The protein operates within secondary metabolite biosynthesis. O-methyltransferase; part of the gene cluster that mediates the biosynthesis of the alkaloid (-)-FR901483, a potent immunosuppressant that shows efficacy in animal models and a probable inhibitor of purine nucleotide biosynthesis by targeting phosphoribosylpyrophosphate amidotransferase (PPAT). Within the pathway, FrzF methylates the phenolic oxygen at position C4. The biosynthesis of (-)-FR901483 starts with the condensation of two L-tyrosines to yield (S,S)-dityrosyl-piperazine. This process occurs in 3 steps with the non-canonical nonribosomal peptide synthetase FrzA catalyzing the reduction of L-tyrosine into L-tyrosinal, the spontaneous condensation of 2 L-tyrosinal units, and the subsequent reduction by the NmrA-like family domain-containing oxidoreductase FrzB. The cytochrome P450 monooxygenase FrzC then performs coupling between N10 and C1' to morph the piperazine into a 1,4-diazabicyclo[3.2.1]octane spiro-fused to a 2,5-cyclohexadienone. The dienone portion is further reduced to cyclohexanone by the flavin-dependent reductase FrzD. The methyltranserases (MTs) FrzE and FrzF are then involved in the methylation at the C10' amine and the C4 phenolic oxygen, respectively. The order of the two MTs appear to be interchangeable. Cleavage of the C9-N10' bond by the dioxygenase FrzG then leads to formation of a conjugated iminium. In addition to the oxidation of C9, an additional dehydrogenation between C7 and C8 can occur to give a likely shunt product. The next biosynthetic step is the intramolecular aldol condensation catalyzed by the newly identified aldolase FrzH to yield an aza-tricyclic product with the formation of a C9-C3' bond. The short-chain dehydrogenase/reductase FrzI then produces dephospho-(-)-FR901483 that is phosphorylated at C4'-OH into (-)-FR901483 by the phosphotransferase FrzJ. The sequence is that of O-methyltransferase FrzF from Cladobotryum sp.